We begin with the raw amino-acid sequence, 169 residues long: Crossover junction endodeoxyribonuclease RuvC (169 aa).

Residues Asp11, Glu71, and Asp143 contribute to the active site. Asp11, Glu71, and Asp143 together coordinate Mg(2+).

The protein belongs to the RuvC family. As to quaternary structure, homodimer which binds Holliday junction (HJ) DNA. The HJ becomes 2-fold symmetrical on binding to RuvC with unstacked arms; it has a different conformation from HJ DNA in complex with RuvA. In the full resolvosome a probable DNA-RuvA(4)-RuvB(12)-RuvC(2) complex forms which resolves the HJ. The cofactor is Mg(2+).

The protein resides in the cytoplasm. The enzyme catalyses Endonucleolytic cleavage at a junction such as a reciprocal single-stranded crossover between two homologous DNA duplexes (Holliday junction).. In terms of biological role, the RuvA-RuvB-RuvC complex processes Holliday junction (HJ) DNA during genetic recombination and DNA repair. Endonuclease that resolves HJ intermediates. Cleaves cruciform DNA by making single-stranded nicks across the HJ at symmetrical positions within the homologous arms, yielding a 5'-phosphate and a 3'-hydroxyl group; requires a central core of homology in the junction. The consensus cleavage sequence is 5'-(A/T)TT(C/G)-3'. Cleavage occurs on the 3'-side of the TT dinucleotide at the point of strand exchange. HJ branch migration catalyzed by RuvA-RuvB allows RuvC to scan DNA until it finds its consensus sequence, where it cleaves and resolves the cruciform DNA. The polypeptide is Crossover junction endodeoxyribonuclease RuvC (Rhizobium etli (strain CIAT 652)).